Consider the following 279-residue polypeptide: Ribosomal RNA small subunit methyltransferase J (279 aa).

S-adenosyl-L-methionine is bound by residues 138 to 139 (ER) and Asp-194.

It belongs to the methyltransferase superfamily. RsmJ family.

It is found in the cytoplasm. The enzyme catalyses guanosine(1516) in 16S rRNA + S-adenosyl-L-methionine = N(2)-methylguanosine(1516) in 16S rRNA + S-adenosyl-L-homocysteine + H(+). Specifically methylates the guanosine in position 1516 of 16S rRNA. The polypeptide is Ribosomal RNA small subunit methyltransferase J (Acinetobacter baumannii (strain SDF)).